The chain runs to 69 residues: Cytochrome c oxidase subunit 8A, mitochondrial (69 aa).

The transit peptide at 1–25 (MSVLTPLLLRGLTGSARRLPVPRAQ) directs the protein to the mitochondrion. An SIFI-degron motif is present at residues 2-19 (SVLTPLLLRGLTGSARRL). The Mitochondrial matrix portion of the chain corresponds to 26–36 (VHSMPPEQKLG). The helical transmembrane segment at 37–60 (VLELAIGFTSCLVTFLLPAGWILS) threads the bilayer. Topologically, residues 61 to 69 (HLDSYKKRG) are mitochondrial intermembrane.

It belongs to the cytochrome c oxidase VIII family. In terms of assembly, component of the cytochrome c oxidase (complex IV, CIV), a multisubunit enzyme composed of 14 subunits. The complex is composed of a catalytic core of 3 subunits MT-CO1, MT-CO2 and MT-CO3, encoded in the mitochondrial DNA, and 11 supernumerary subunits COX4I, COX5A, COX5B, COX6A, COX6B, COX6C, COX7A, COX7B, COX7C, COX8 and NDUFA4, which are encoded in the nuclear genome. The complex exists as a monomer or a dimer and forms supercomplexes (SCs) in the inner mitochondrial membrane with NADH-ubiquinone oxidoreductase (complex I, CI) and ubiquinol-cytochrome c oxidoreductase (cytochrome b-c1 complex, complex III, CIII), resulting in different assemblies (supercomplex SCI(1)III(2)IV(1) and megacomplex MCI(2)III(2)IV(2)). In terms of processing, in response to mitochondrial stress, the precursor protein is ubiquitinated by the SIFI complex in the cytoplasm before mitochondrial import, leading to its degradation. Within the SIFI complex, UBR4 initiates ubiquitin chain that are further elongated or branched by KCMF1.

The protein localises to the mitochondrion inner membrane. It functions in the pathway energy metabolism; oxidative phosphorylation. In terms of biological role, component of the cytochrome c oxidase, the last enzyme in the mitochondrial electron transport chain which drives oxidative phosphorylation. The respiratory chain contains 3 multisubunit complexes succinate dehydrogenase (complex II, CII), ubiquinol-cytochrome c oxidoreductase (cytochrome b-c1 complex, complex III, CIII) and cytochrome c oxidase (complex IV, CIV), that cooperate to transfer electrons derived from NADH and succinate to molecular oxygen, creating an electrochemical gradient over the inner membrane that drives transmembrane transport and the ATP synthase. Cytochrome c oxidase is the component of the respiratory chain that catalyzes the reduction of oxygen to water. Electrons originating from reduced cytochrome c in the intermembrane space (IMS) are transferred via the dinuclear copper A center (CU(A)) of subunit 2 and heme A of subunit 1 to the active site in subunit 1, a binuclear center (BNC) formed by heme A3 and copper B (CU(B)). The BNC reduces molecular oxygen to 2 water molecules using 4 electrons from cytochrome c in the IMS and 4 protons from the mitochondrial matrix. The sequence is that of Cytochrome c oxidase subunit 8A, mitochondrial (COX8A) from Saimiri sciureus (Common squirrel monkey).